A 555-amino-acid chain; its full sequence is DNA-directed primase/polymerase protein (555 aa).

Residues 1 to 22 (MKRKWEATLKQIEERASHYERK) are a coiled coil. Substrate is bound by residues R76, 114–116 (DLE), and 165–169 (KFSRH). Mn(2+) contacts are provided by D114 and E116. The segment at 210–230 (ETTGHEFTHFSETPSEQGTCF) is disordered. Positions 219–230 (FSETPSEQGTCF) are enriched in polar residues. At S255 the chain carries Phosphoserine. Residues 288–291 (RNFR) and K297 contribute to the substrate site. Positions 418, 425, 445, and 450 each coordinate Zn(2+). The short motif at 418-451 (CENIGRAHRSNNIMILVDLKNEVWYQKCHDPVCK) is the Zinc knuckle motif element. The segment at 480–503 (TDTTADTETKSPHGPSSSVLSKGA) is disordered. The interaction with RPA1 stretch occupies residues 480–555 (TDTTADTETK…DELLIEVLQE (76 aa)). 2 consecutive short sequence motifs (RPA1-binding motif) follow at residues 509–523 (WDNGIDDTYILEATE) and 543–551 (EIPDELLIE).

The protein belongs to the eukaryotic-type primase small subunit family. In terms of assembly, interacts with RPA1; leading to recruitment to chromatin and stimulate DNA primase activity. Interacts with SSBP1. Interacts with POLDIP2; leading to enhance DNA polymerase activity. Requires Mn(2+) as cofactor.

The protein localises to the nucleus. The protein resides in the mitochondrion matrix. It is found in the chromosome. It catalyses the reaction ssDNA + n NTP = ssDNA/pppN(pN)n-1 hybrid + (n-1) diphosphate.. The catalysed reaction is DNA(n) + a 2'-deoxyribonucleoside 5'-triphosphate = DNA(n+1) + diphosphate. In terms of biological role, DNA primase and DNA polymerase required to tolerate replication-stalling lesions by bypassing them. Required to facilitate mitochondrial and nuclear replication fork progression by initiating de novo DNA synthesis using dNTPs and acting as an error-prone DNA polymerase able to bypass certain DNA lesions. Shows a high capacity to tolerate DNA damage lesions such as 8oxoG and abasic sites in DNA. Provides different translesion synthesis alternatives when DNA replication is stalled: able to synthesize DNA primers downstream of lesions, such as ultraviolet (UV) lesions, R-loops and G-quadruplexes, to allow DNA replication to continue. Can also realign primers ahead of 'unreadable lesions' such as abasic sites and 6-4 photoproduct (6-4 pyrimidine-pyrimidinone), thereby skipping the lesion. Repriming avoids fork degradation while leading to accumulation of internal ssDNA gaps behind the forks. Also able to incorporate nucleotides opposite DNA lesions such as 8oxoG, like a regular translesion synthesis DNA polymerase. Also required for reinitiating stalled forks after UV damage during nuclear DNA replication. Required for mitochondrial DNA (mtDNA) synthesis and replication, by reinitiating synthesis after UV damage or in the presence of chain-terminating nucleotides. Prevents APOBEC family-mediated DNA mutagenesis by repriming downstream of abasic site to prohibit error-prone translesion synthesis. Has non-overlapping function with POLH. In addition to its role in DNA damage response, also required to maintain efficient nuclear and mitochondrial DNA replication in unperturbed cells. The protein is DNA-directed primase/polymerase protein of Bos taurus (Bovine).